The following is a 442-amino-acid chain: N-acetyl-S-alkylcysteine sulfoxide monooxygenase (442 aa).

Asp-58, Thr-95, His-145, Tyr-149, Ser-219, and Ser-220 together coordinate FMN.

Belongs to the NtaA/SnaA/DszA monooxygenase family. Homodimer.

It carries out the reaction (R)-N-acetyl-S-benzyl-L-cysteine sulfoxide + FMNH2 + O2 = N-acetyl-S-hydroxy-L-cysteine + benzaldehyde + FMN + H2O + H(+). The protein operates within amino-acid metabolism. Functionally, involved in a cysteine salvage pathway from S-alkylcysteine. Catalyzes the C-S bond cleavage in N-acetyl-S-benzyl-L-cysteine sulfoxide leading to N-acetyl-S-hydroxy-L-cysteine and benzaldehyde. This pathway is likely important in the catabolism of alkylated cysteine generated by proteolysis of alkylated glutathione formed in the detoxification of a wide range of electrophiles. Has much less efficient activity with N-acetyl-S-methyl-L-cysteine sulfoxide as substrate. Cannot use S-alkylated L-cysteine sulfones and ketone analogs as substrates, demonstrating that the sulfoxide is required for activity. The sequence is that of N-acetyl-S-alkylcysteine sulfoxide monooxygenase from Bacillus subtilis (strain 168).